Consider the following 433-residue polypeptide: Protoheme IX farnesyltransferase 2 (433 aa).

Residues 1-164 (MQRFTGLVTA…LTKPRLMWLL (164 aa)) form a unknown region. 13 consecutive transmembrane segments (helical) span residues 4–24 (FTGL…LGVA), 35–55 (AVAH…AAAL), 67–87 (WGVT…MAVL), 95–115 (LHLF…TWHL), 160–180 (LMWL…VTGA), 184–204 (GVTI…AGTF), 236–256 (AFGV…VNPL), 257–277 (AAAL…VVLK), 282–304 (WNTV…AVAG), 308–330 (LPAL…NLAI), 357–377 (ILYW…VAGF), 378–398 (GPVY…TVVV), and 413–433 (HASN…TMVI). The interval 165-430 (CLLALSGMAL…ALLVAILVET (266 aa)) is protoheme IX prenyltransferase.

The protein in the C-terminal section; belongs to the UbiA prenyltransferase family. Protoheme IX farnesyltransferase subfamily.

Its subcellular location is the cell membrane. It carries out the reaction heme b + (2E,6E)-farnesyl diphosphate + H2O = Fe(II)-heme o + diphosphate. The protein operates within porphyrin-containing compound metabolism; heme O biosynthesis; heme O from protoheme: step 1/1. Functionally, converts heme B (protoheme IX) to heme O by substitution of the vinyl group on carbon 2 of heme B porphyrin ring with a hydroxyethyl farnesyl side group. The polypeptide is Protoheme IX farnesyltransferase 2 (ctaB2) (Natronomonas pharaonis (strain ATCC 35678 / DSM 2160 / CIP 103997 / JCM 8858 / NBRC 14720 / NCIMB 2260 / Gabara) (Halobacterium pharaonis)).